The sequence spans 380 residues: Actin-like protein (380 aa).

It belongs to the actin family. ARP1 subfamily.

The protein localises to the cytoplasm. It localises to the cytoskeleton. Involved in nuclear migration. May function as a component of the dynactin complex which activates force generation by cytoplasmic dynein. The polypeptide is Actin-like protein (ro-4) (Neurospora crassa (strain ATCC 24698 / 74-OR23-1A / CBS 708.71 / DSM 1257 / FGSC 987)).